The chain runs to 418 residues: Putative ion-transport protein YfeO (418 aa).

The next 12 helical transmembrane spans lie at 10-30, 54-74, 99-119, 120-140, 149-169, 186-206, 223-243, 258-278, 300-320, 322-342, 343-363, and 371-391; these read LLLS…LIVV, DSPF…GLVI, ALLG…SLGP, EHPI…RLLP, ILAS…AALI, LFAP…FFHP, ILSG…AVWC, VLVL…GGPV, DYFL…ASGF, GGRI…LHEH, VPAV…VLVV, and LFMA…CIVM.

The protein belongs to the chloride channel (TC 2.A.49) family.

The protein resides in the cell membrane. The polypeptide is Putative ion-transport protein YfeO (Escherichia coli O17:K52:H18 (strain UMN026 / ExPEC)).